We begin with the raw amino-acid sequence, 166 residues long: C-signal (166 aa).

In terms of processing, the mature C-signal (p17) is derived from the precursor sequence (p25) by proteolytic cleavage. The subtilisin-like protease PopC is directly responsible for cleavage of p25 to p17. The cleavage site is probably located between amino acid residues 60 and 68 in p25.

Its subcellular location is the secreted. It is found in the cell outer membrane. With respect to regulation, synthesized as a precursor protein (p25), which is cleaved after secretion to generate the mature active C-signal (p17). The p25 precursor purified from M.xanthus cells does not display C-signal activity. Cell-cell signaling protein required for fruiting body formation, a multicellular developmental program that is induced in response to starvation. Necessary for rippling, cellular aggregation, spore differentiation and for gene expression that is initiated after 6 hours of starvation. In starving cells, the C-signal directly induces aggregation and sporulation, which are induced at distinct threshold levels of C-signaling. Contact with C-signaling induces cells to glide with high speed and low stop and reversal frequencies toward aggregation centers. The C-signal acts as a morphogen and induces distinct events at distinct threshold levels. A regulated increase in the level of C-signaling during development ensures the correct temporal order of aggregation and sporulation. The polypeptide is C-signal (Myxococcus xanthus).